The following is a 74-amino-acid chain: Benzylsuccinate synthase beta subunit (74 aa).

In terms of assembly, heterohexamer composed of 2 alpha subunits, 2 beta subunits and 2 gamma subunits.

It catalyses the reaction toluene + fumarate = 2-benzylsuccinate. It functions in the pathway xenobiotic degradation; toluene degradation. Its activity is regulated as follows. Activated by the benzylsuccinate synthase activating enzyme BssD. Rapidly inactivated by oxygen. Catalyzes the addition of fumarate to the methyl group of toluene, leading to the formation of benzylsuccinate. The chain is Benzylsuccinate synthase beta subunit (bssB) from Thauera aromatica.